The sequence spans 174 residues: UPF0664 stress-induced protein C29B12.11c (174 aa).

The interval 147 to 174 is disordered; that stretch reads HLDPLPPYHRPSSSQDQPPHYEEAVNKS. The segment covering 165-174 has biased composition (basic and acidic residues); that stretch reads PHYEEAVNKS.

The protein belongs to the UPF0664 family.

The protein localises to the cytoplasm. It localises to the nucleus. This Schizosaccharomyces pombe (strain 972 / ATCC 24843) (Fission yeast) protein is UPF0664 stress-induced protein C29B12.11c.